We begin with the raw amino-acid sequence, 83 residues long: U-actitoxin-Aeq6a (83 aa).

Positions methionine 1–cysteine 20 are cleaved as a signal peptide. Positions serine 21 to glutamate 36 are excised as a propeptide. Proline 82 bears the Proline amide mark.

Post-translationally, contains 3 disulfide bonds. Expressed by acrorhagi.

The protein resides in the secreted. The protein localises to the nematocyst. Functionally, toxin. This chain is U-actitoxin-Aeq6a, found in Actinia equina (Beadlet anemone).